The chain runs to 285 residues: Phosphatidylserine decarboxylase proenzyme (285 aa).

Active-site charge relay system; for autoendoproteolytic cleavage activity residues include D89, H146, and S252. The Schiff-base intermediate with substrate; via pyruvic acid; for decarboxylase activity role is filled by S252. The residue at position 252 (S252) is a Pyruvic acid (Ser); by autocatalysis.

Belongs to the phosphatidylserine decarboxylase family. PSD-B subfamily. Prokaryotic type I sub-subfamily. In terms of assembly, heterodimer of a large membrane-associated beta subunit and a small pyruvoyl-containing alpha subunit. The cofactor is pyruvate. In terms of processing, is synthesized initially as an inactive proenzyme. Formation of the active enzyme involves a self-maturation process in which the active site pyruvoyl group is generated from an internal serine residue via an autocatalytic post-translational modification. Two non-identical subunits are generated from the proenzyme in this reaction, and the pyruvate is formed at the N-terminus of the alpha chain, which is derived from the carboxyl end of the proenzyme. The autoendoproteolytic cleavage occurs by a canonical serine protease mechanism, in which the side chain hydroxyl group of the serine supplies its oxygen atom to form the C-terminus of the beta chain, while the remainder of the serine residue undergoes an oxidative deamination to produce ammonia and the pyruvoyl prosthetic group on the alpha chain. During this reaction, the Ser that is part of the protease active site of the proenzyme becomes the pyruvoyl prosthetic group, which constitutes an essential element of the active site of the mature decarboxylase.

The protein localises to the cell membrane. It carries out the reaction a 1,2-diacyl-sn-glycero-3-phospho-L-serine + H(+) = a 1,2-diacyl-sn-glycero-3-phosphoethanolamine + CO2. Its pathway is phospholipid metabolism; phosphatidylethanolamine biosynthesis; phosphatidylethanolamine from CDP-diacylglycerol: step 2/2. Functionally, catalyzes the formation of phosphatidylethanolamine (PtdEtn) from phosphatidylserine (PtdSer). This chain is Phosphatidylserine decarboxylase proenzyme, found in Vibrio parahaemolyticus serotype O3:K6 (strain RIMD 2210633).